The following is a 488-amino-acid chain: MQYRDLRDFISGLEKRGELKRVTAAVSPVLEMTEICDRTLRKQGPALLFENPTGFDMPVLGNLFGTPGRVALGMGAEDVSELREIGKLLAFLKEPEPPKGLKDAWSKLPIYKKVISMAPKVLKDAPCQEVIVEGDDVDLTKIPVQHCWPGDAAPLITWGLTITKGPNKERQNLGIYRQQVIGRNKVIMRWLSHRGGALDFREWCEKYPDRPYPVAVALGADPATILGAVTPVPDTLSEYAFAGLLRGSRTELVKAIGSELQVPAYAEIVLEGHIHPGEMADEGPYGDHTGYYNEVDRFPVFTVERITHRKNPIYHSTYTGRPPDEPAILGVALNEVFVPILQKQFPEIVDFYLPPEGCSYRMAVVTMKKQYPGHAKRVMLGVWSFLRQFMYTKFVIVTDDDINARDWNDVIWAITTRMDPKRDTVMIDNTPIDYLDFASPISGLGSKMGLDATHKWPGETNREWGRAIVQDPAVKRRVDELWLQLGID.

Residue N172 participates in Mn(2+) binding. Residues 175 to 177 (IYR), 189 to 191 (RWL), and 194 to 195 (RG) each bind prenylated FMN. E238 contributes to the Mn(2+) binding site. Residue D287 is the Proton donor of the active site.

Belongs to the UbiD family. As to quaternary structure, homohexamer. It depends on prenylated FMN as a cofactor. Mn(2+) serves as cofactor.

The protein localises to the cell membrane. The enzyme catalyses a 4-hydroxy-3-(all-trans-polyprenyl)benzoate + H(+) = a 2-(all-trans-polyprenyl)phenol + CO2. The protein operates within cofactor biosynthesis; ubiquinone biosynthesis. Catalyzes the decarboxylation of 3-octaprenyl-4-hydroxy benzoate to 2-octaprenylphenol, an intermediate step in ubiquinone biosynthesis. This is 3-octaprenyl-4-hydroxybenzoate carboxy-lyase from Stutzerimonas stutzeri (strain A1501) (Pseudomonas stutzeri).